Reading from the N-terminus, the 88-residue chain is Small ribosomal subunit protein uS15c (88 aa).

It belongs to the universal ribosomal protein uS15 family. As to quaternary structure, part of the 30S ribosomal subunit.

Its subcellular location is the plastid. The protein resides in the chloroplast. The sequence is that of Small ribosomal subunit protein uS15c (rps15) from Marchantia polymorpha (Common liverwort).